Reading from the N-terminus, the 356-residue chain is Probable dual-specificity RNA methyltransferase RlmN (356 aa).

Glu-92 functions as the Proton acceptor in the catalytic mechanism. Residues 98-336 enclose the Radical SAM core domain; it reads HKYGFSVCVT…CGVRLEHGTD (239 aa). A disulfide bond links Cys-105 and Cys-341. The [4Fe-4S] cluster site is built by Cys-112, Cys-116, and Cys-119. S-adenosyl-L-methionine contacts are provided by residues 164 to 165, Ser-196, 219 to 221, and Asn-297; these read GE and SLH. Cys-341 serves as the catalytic S-methylcysteine intermediate.

It belongs to the radical SAM superfamily. RlmN family. [4Fe-4S] cluster serves as cofactor.

Its subcellular location is the cytoplasm. It catalyses the reaction adenosine(2503) in 23S rRNA + 2 reduced [2Fe-2S]-[ferredoxin] + 2 S-adenosyl-L-methionine = 2-methyladenosine(2503) in 23S rRNA + 5'-deoxyadenosine + L-methionine + 2 oxidized [2Fe-2S]-[ferredoxin] + S-adenosyl-L-homocysteine. It carries out the reaction adenosine(37) in tRNA + 2 reduced [2Fe-2S]-[ferredoxin] + 2 S-adenosyl-L-methionine = 2-methyladenosine(37) in tRNA + 5'-deoxyadenosine + L-methionine + 2 oxidized [2Fe-2S]-[ferredoxin] + S-adenosyl-L-homocysteine. Functionally, specifically methylates position 2 of adenine 2503 in 23S rRNA and position 2 of adenine 37 in tRNAs. The protein is Probable dual-specificity RNA methyltransferase RlmN of Shouchella clausii (strain KSM-K16) (Alkalihalobacillus clausii).